The primary structure comprises 128 residues: Large ribosomal subunit protein bL17 (128 aa).

Belongs to the bacterial ribosomal protein bL17 family. As to quaternary structure, part of the 50S ribosomal subunit. Contacts protein L32.

This Pseudomonas entomophila (strain L48) protein is Large ribosomal subunit protein bL17.